The following is a 264-amino-acid chain: Sulfur carrier protein FdhD (264 aa).

The active-site Cysteine persulfide intermediate is Cys107.

The protein belongs to the FdhD family.

Its subcellular location is the cytoplasm. Required for formate dehydrogenase (FDH) activity. Acts as a sulfur carrier protein that transfers sulfur from IscS to the molybdenum cofactor prior to its insertion into FDH. This chain is Sulfur carrier protein FdhD, found in Staphylococcus haemolyticus (strain JCSC1435).